The chain runs to 218 residues: Ribose-5-phosphate isomerase A (218 aa).

Substrate-binding positions include 28 to 31, 81 to 84, and 94 to 97; these read SGST, DGAD, and KGGG. The active-site Proton acceptor is glutamate 103. A substrate-binding site is contributed by lysine 121.

Belongs to the ribose 5-phosphate isomerase family. As to quaternary structure, homodimer.

The enzyme catalyses aldehydo-D-ribose 5-phosphate = D-ribulose 5-phosphate. It functions in the pathway carbohydrate degradation; pentose phosphate pathway; D-ribose 5-phosphate from D-ribulose 5-phosphate (non-oxidative stage): step 1/1. Functionally, catalyzes the reversible conversion of ribose-5-phosphate to ribulose 5-phosphate. The protein is Ribose-5-phosphate isomerase A of Dichelobacter nodosus (strain VCS1703A).